Reading from the N-terminus, the 173-residue chain is Photosystem I assembly protein Ycf3 (173 aa).

TPR repeat units lie at residues 35–68, 72–105, and 113–146; these read AFAY…EEDP, SYIL…NPRM, and AVIY…WKRA.

Belongs to the Ycf3 family.

Its subcellular location is the cellular thylakoid membrane. Its function is as follows. Essential for the assembly of the photosystem I (PSI) complex. May act as a chaperone-like factor to guide the assembly of the PSI subunits. This Thermosynechococcus vestitus (strain NIES-2133 / IAM M-273 / BP-1) protein is Photosystem I assembly protein Ycf3.